The sequence spans 392 residues: MPLSQKQIDQVRTKVHYSEVDTPFNKYLDILGKVTKLTGSIINGTLSNDDSKIEKLTEQNISQLKESAHLRFLDLQSSIDTKKVADENWETCQQETLAKLENLKDKLPDIKSIHSKLLLRIGKLQGLYDSVQVINREVEGLSEGRTSLVVTRAEWEKELGTDLVKFLIEKNYLKLVDPGLKKDSSEERYRIYDDFSKGPKELESINASMKSDIENVRQEVSSYKEKWLRDAEIFGKITSIFKEELLKRDGLLNEAEGDNIDEDYESDEDEERKERFKRQRSMVEVNTIENVDEKEESDHEYDDQEDEENEEEDDMEVDVEDIKEDNEVDGESSQQEDNSRQGNNEETDKETGVIEEPDAVNDAEEADSDHSSRKLGGTTSDFSASSSVEEVK.

Composition is skewed to acidic residues over residues 258 to 271 (DNID…EDEE) and 290 to 330 (NVDE…EVDG). Residues 258–392 (DNIDEDYESD…SASSSVEEVK (135 aa)) are disordered. Ser266 is modified (phosphoserine). Residues 331-344 (ESSQQEDNSRQGNN) show a composition bias toward polar residues. The segment covering 345 to 367 (EETDKETGVIEEPDAVNDAEEAD) has biased composition (acidic residues). Polar residues predominate over residues 377-392 (GTTSDFSASSSVEEVK).

Component of the THO complex, which is composed of HPR1, MFT1, THO2 and THP2. Together with SUB2, TEX1 and YRA1, THO forms the transcription/export (TREX) complex. THO associates with DNA and RNA in vitro.

The protein localises to the nucleus. Its function is as follows. Component the THO subcomplex of the TREX complex, which operates in coupling transcription elongation to mRNA export. The THO complex is recruited to transcribed genes and moves along the gene with the elongating polymerase during transcription. THO is important for stabilizing nascent RNA in the RNA polymerase II elongation complex by preventing formation of DNA:RNA hybrids behind the elongating polymerase. It functions in cotranscriptional formation of an export-competent messenger ribonucleoprotein particle (mRNP) by facilitating the loading of ATP-dependent RNA helicase SUB2 and the mRNA export factor YRA1 along the nascent mRNA. The protein is THO complex subunit MFT1 (MFT1) of Saccharomyces cerevisiae (strain ATCC 204508 / S288c) (Baker's yeast).